The sequence spans 359 residues: Aminomethyltransferase (359 aa).

The protein belongs to the GcvT family. In terms of assembly, the glycine cleavage system is composed of four proteins: P, T, L and H.

The catalysed reaction is N(6)-[(R)-S(8)-aminomethyldihydrolipoyl]-L-lysyl-[protein] + (6S)-5,6,7,8-tetrahydrofolate = N(6)-[(R)-dihydrolipoyl]-L-lysyl-[protein] + (6R)-5,10-methylene-5,6,7,8-tetrahydrofolate + NH4(+). The glycine cleavage system catalyzes the degradation of glycine. This is Aminomethyltransferase from Pseudoalteromonas atlantica (strain T6c / ATCC BAA-1087).